The primary structure comprises 591 residues: L-fucose isomerase (591 aa).

Catalysis depends on proton acceptor residues Glu337 and Asp361. 3 residues coordinate Mn(2+): Glu337, Asp361, and His528.

It belongs to the L-fucose isomerase family. As to quaternary structure, homohexamer. Requires Mn(2+) as cofactor.

It is found in the cytoplasm. The enzyme catalyses L-fucose = L-fuculose. The protein operates within carbohydrate degradation; L-fucose degradation; L-lactaldehyde and glycerone phosphate from L-fucose: step 1/3. In terms of biological role, converts the aldose L-fucose into the corresponding ketose L-fuculose. The chain is L-fucose isomerase from Salmonella paratyphi B (strain ATCC BAA-1250 / SPB7).